Here is a 240-residue protein sequence, read N- to C-terminus: Biotin--[acetyl-CoA-carboxylase] ligase (240 aa).

The 176-residue stretch at 1–176 (MLARTDSTNA…AFARWQAQLD (176 aa)) folds into the BPL/LPL catalytic domain. Biotin contacts are provided by residues 7–9 (STN), Gln30, 34–36 (RGR), and Lys102.

The protein belongs to the biotin--protein ligase family.

The catalysed reaction is biotin + L-lysyl-[protein] + ATP = N(6)-biotinyl-L-lysyl-[protein] + AMP + diphosphate + H(+). Activates biotin to form biotinyl-5'-adenylate and transfers the biotin moiety to biotin-accepting proteins. In Paracoccus denitrificans, this protein is Biotin--[acetyl-CoA-carboxylase] ligase (birA).